Consider the following 103-residue polypeptide: uncharacterized protein (103 aa).

The tract at residues 1 to 103 (MAGARRRARC…WRGGSCTSQR (103 aa)) is disordered. 2 stretches are compositionally biased toward basic residues: residues 55 to 65 (RRPGPGRRARS) and 74 to 84 (RPPHSRTRARR).

It belongs to the epstein-barr virus RPMS1 family.

This is an uncharacterized protein from Epstein-Barr virus (strain GD1) (HHV-4).